We begin with the raw amino-acid sequence, 760 residues long: Armadillo-like helical domain-containing protein 4 (760 aa).

Positions 1 to 27 are cleaved as a signal peptide; sequence MSRPIVLHICLAFCSLLLLNFAAQCLA. Over 28–700 the chain is Extracellular; that stretch reads FPNLERREIV…KDKAGYMSGM (673 aa). Disordered regions lie at residues 49–69, 117–143, 216–243, 373–392, 474–495, and 536–652; these read LNTD…SGDP, GEEV…LTNP, RTEK…TEPS, HGGE…PMGD, TRGE…DAPR, and NEEL…SQEP. N-linked (GlcNAc...) asparagine glycosylation occurs at N56. The span at 216 to 228 shows a compositional bias: basic and acidic residues; that stretch reads RTEKFEANPEHKT. The span at 380–390 shows a compositional bias: polar residues; the sequence is DQSSVTPTSPM. Over residues 474-484 the composition is skewed to basic and acidic residues; that stretch reads TRGEDETKGGR. The span at 594 to 635 shows a compositional bias: acidic residues; sequence LESEEGEDDEDEEDEEEEDEEEEDEEEDEEDKDADSLDEALG. The helical transmembrane segment at 701–721 threads the bilayer; it reads LVPVGVGIAGALFILGALYSI. At 722 to 760 the chain is on the cytoplasmic side; the sequence is KVMNRRRRNGFKRHKRKQREFNSMQDRVMLLADSSEDEF. S755 and S756 each carry phosphoserine.

Interacts with IL6ST; this interaction prevents IL6ST protein homodimerization and bridges ARMH4 with IL6R and STAT3 and therefore inhibits phosphorylation of STAT3 at 'Tyr-705'. Interacts (via cytoplasmic tail) with RICTOR; this interaction bridges ARMH4 to the mTORC2 complex and inhibits the mTORC2 kinase activity.

The protein localises to the membrane. Functionally, may modulate immune response and may play a role in inflammation. Down-modulates STAT3 signaling throught direct interaction with IL6ST, resulting in the inhibition of phosphorylation of STAT3 at Tyr-705. May negatively regulates AKT signaling by modulating the activity of mTORC2 complex through RICTOR interaction. This is Armadillo-like helical domain-containing protein 4 from Bos taurus (Bovine).